Reading from the N-terminus, the 417-residue chain is MCSIVEDDFGDEGGAHAMKEDTPQPELGGNELCRKCNTEQAVLKLNQKEPQCRVCFLNYVRHKFRASLGSTKIVRRGSRVLIILTGEPANVTLLDMVRFGLEQDAFKQLRIVPVLLYVDDDFVGNTSEARLQQLAERLQVFKQFESFPAYYTVCGSSRHVALTFDGAFSPAGFEQDEARLLQVLDAVRSVSSKQDLLEQVRKQTYRQIGHALQCAYVFLSDIGVDLAKTLLSNVALGRGCSLAQDVAFCDDRYNTVKLVRPIRDLNPDEVSNYLQYSEQPLLSYSPAKHFEDKPSLQNLTAKFIDNLMQSFPSTVSTVYRTGDKLDAPKAARNECCRFCGAALDYRGSKTLFATEYSRLVSSRINAACSHEDILLKSKQMELDAERAVNGEDDQGEERVLMKQLCHGCRNIFEDLNK.

Positions 1 to 11 (MCSIVEDDFGD) are enriched in acidic residues. Residues 1–24 (MCSIVEDDFGDEGGAHAMKEDTPQ) form a disordered region. Over residues 13–22 (GGAHAMKEDT) the composition is skewed to basic and acidic residues.

The protein belongs to the CTU2/NCS2 family.

It localises to the cytoplasm. It functions in the pathway tRNA modification; 5-methoxycarbonylmethyl-2-thiouridine-tRNA biosynthesis. Functionally, plays a central role in 2-thiolation of mcm(5)S(2)U at tRNA wobble positions of tRNA(Lys), tRNA(Glu) and tRNA(Gln). May act by forming a heterodimer with NCS6/CTU1 that ligates sulfur from thiocarboxylated URM1 onto the uridine of tRNAs at wobble position. This Anopheles gambiae (African malaria mosquito) protein is Cytoplasmic tRNA 2-thiolation protein 2.